We begin with the raw amino-acid sequence, 266 residues long: Large ribosomal subunit protein uL3 (266 aa).

A disordered region spans residues 124–149 (NQKIGPKSHGGGGGSKPVRQTGSLGD).

Belongs to the universal ribosomal protein uL3 family. In terms of assembly, part of the 50S ribosomal subunit. Forms a cluster with proteins L14 and L19.

One of the primary rRNA binding proteins, it binds directly near the 3'-end of the 23S rRNA, where it nucleates assembly of the 50S subunit. The protein is Large ribosomal subunit protein uL3 of Mycoplasmopsis pulmonis (strain UAB CTIP) (Mycoplasma pulmonis).